A 159-amino-acid chain; its full sequence is NAD(P)H-quinone oxidoreductase subunit I, chloroplastic (159 aa).

4Fe-4S ferredoxin-type domains follow at residues 55–84 (GRIH…VDWN) and 95–124 (KNYS…MTEE). [4Fe-4S] cluster is bound by residues Cys-64, Cys-67, Cys-70, Cys-74, Cys-104, Cys-107, Cys-110, and Cys-114.

This sequence belongs to the complex I 23 kDa subunit family. NDH is composed of at least 16 different subunits, 5 of which are encoded in the nucleus. The cofactor is [4Fe-4S] cluster.

It is found in the plastid. Its subcellular location is the chloroplast thylakoid membrane. It catalyses the reaction a plastoquinone + NADH + (n+1) H(+)(in) = a plastoquinol + NAD(+) + n H(+)(out). It carries out the reaction a plastoquinone + NADPH + (n+1) H(+)(in) = a plastoquinol + NADP(+) + n H(+)(out). In terms of biological role, NDH shuttles electrons from NAD(P)H:plastoquinone, via FMN and iron-sulfur (Fe-S) centers, to quinones in the photosynthetic chain and possibly in a chloroplast respiratory chain. The immediate electron acceptor for the enzyme in this species is believed to be plastoquinone. Couples the redox reaction to proton translocation, and thus conserves the redox energy in a proton gradient. This is NAD(P)H-quinone oxidoreductase subunit I, chloroplastic from Chara vulgaris (Common stonewort).